Reading from the N-terminus, the 726-residue chain is Catalase-peroxidase (726 aa).

A cross-link (tryptophyl-tyrosyl-methioninium (Trp-Tyr) (with M-252)) is located at residues 98 to 226 (WHSAGTYRMQ…LAAVHMGLIY (129 aa)). Catalysis depends on H99, which acts as the Proton acceptor. Positions 226-252 (YVNPEGVNGQPDPARTAQHVRETFARM) form a cross-link, tryptophyl-tyrosyl-methioninium (Tyr-Met) (with W-98). H267 is a binding site for heme b.

It belongs to the peroxidase family. Peroxidase/catalase subfamily. As to quaternary structure, homodimer or homotetramer. The cofactor is heme b. Formation of the three residue Trp-Tyr-Met cross-link is important for the catalase, but not the peroxidase activity of the enzyme.

The enzyme catalyses H2O2 + AH2 = A + 2 H2O. It carries out the reaction 2 H2O2 = O2 + 2 H2O. Its function is as follows. Bifunctional enzyme with both catalase and broad-spectrum peroxidase activity. This chain is Catalase-peroxidase, found in Roseobacter denitrificans (strain ATCC 33942 / OCh 114) (Erythrobacter sp. (strain OCh 114)).